Here is a 336-residue protein sequence, read N- to C-terminus: 3-isopropylmalate dehydrogenase (336 aa).

Positions 87, 97, 121, and 211 each coordinate substrate. Residues aspartate 211, aspartate 235, and aspartate 239 each coordinate Mg(2+). 271 to 283 (GSAPDIAGQGIAD) serves as a coordination point for NAD(+).

It belongs to the isocitrate and isopropylmalate dehydrogenases family. LeuB type 2 subfamily. In terms of assembly, homodimer. Mg(2+) is required as a cofactor. The cofactor is Mn(2+).

Its subcellular location is the cytoplasm. It catalyses the reaction (2R,3S)-3-isopropylmalate + NAD(+) = 4-methyl-2-oxopentanoate + CO2 + NADH. Its pathway is amino-acid biosynthesis; L-leucine biosynthesis; L-leucine from 3-methyl-2-oxobutanoate: step 3/4. In terms of biological role, catalyzes the oxidation of 3-carboxy-2-hydroxy-4-methylpentanoate (3-isopropylmalate) to 3-carboxy-4-methyl-2-oxopentanoate. The product decarboxylates to 4-methyl-2 oxopentanoate. This Mycolicibacterium vanbaalenii (strain DSM 7251 / JCM 13017 / BCRC 16820 / KCTC 9966 / NRRL B-24157 / PYR-1) (Mycobacterium vanbaalenii) protein is 3-isopropylmalate dehydrogenase.